The chain runs to 171 residues: Peptidyl-prolyl cis-trans isomerase slr1251 (171 aa).

The PPIase cyclophilin-type domain occupies 6–169; it reads FFDITIGSDT…QAIVISDCGE (164 aa).

It belongs to the cyclophilin-type PPIase family.

The catalysed reaction is [protein]-peptidylproline (omega=180) = [protein]-peptidylproline (omega=0). Functionally, PPIases accelerate the folding of proteins. It catalyzes the cis-trans isomerization of proline imidic peptide bonds in oligopeptides. The polypeptide is Peptidyl-prolyl cis-trans isomerase slr1251 (Synechocystis sp. (strain ATCC 27184 / PCC 6803 / Kazusa)).